The sequence spans 556 residues: Arginine--tRNA ligase (556 aa).

The short motif at 132–142 is the 'HIGH' region element; sequence ANPTGDLHLGH.

It belongs to the class-I aminoacyl-tRNA synthetase family. In terms of assembly, monomer.

Its subcellular location is the cytoplasm. It catalyses the reaction tRNA(Arg) + L-arginine + ATP = L-arginyl-tRNA(Arg) + AMP + diphosphate. The chain is Arginine--tRNA ligase from Bacillus cereus (strain ATCC 10987 / NRS 248).